The following is a 201-amino-acid chain: ADP-ribosylation factor-like protein 4D (201 aa).

The N-myristoyl glycine moiety is linked to residue glycine 2. GTP-binding positions include 28–35, 76–80, and 135–138; these read GLDSAGKT, DVGGQ, and NKQD.

Belongs to the small GTPase superfamily. Arf family. As to quaternary structure, interacts with CYTH2; the interaction is direct and ARL4D GTP-dependent. Does not interact with ARL4D.

Its subcellular location is the nucleus. The protein localises to the nucleolus. It localises to the cell membrane. It is found in the cytoplasm. In terms of biological role, small GTP-binding protein which cycles between an inactive GDP-bound and an active GTP-bound form, and the rate of cycling is regulated by guanine nucleotide exchange factors (GEF) and GTPase-activating proteins (GAP). GTP-binding protein that does not act as an allosteric activator of the cholera toxin catalytic subunit. Recruits CYTH1, CYTH2, CYTH3 and CYTH4 to the plasma membrane in GDP-bound form. In Homo sapiens (Human), this protein is ADP-ribosylation factor-like protein 4D (ARL4D).